Consider the following 542-residue polypeptide: Chaperonin GroEL 2 (542 aa).

ATP is bound by residues 30–33 (TLGP), Lys51, 87–91 (DGTTT), Gly415, and Asp496.

It belongs to the chaperonin (HSP60) family. As to quaternary structure, forms a cylinder of 14 subunits composed of two heptameric rings stacked back-to-back. Interacts with the co-chaperonin GroES.

The protein localises to the cytoplasm. It carries out the reaction ATP + H2O + a folded polypeptide = ADP + phosphate + an unfolded polypeptide.. Its function is as follows. Together with its co-chaperonin GroES, plays an essential role in assisting protein folding. The GroEL-GroES system forms a nano-cage that allows encapsulation of the non-native substrate proteins and provides a physical environment optimized to promote and accelerate protein folding. The polypeptide is Chaperonin GroEL 2 (Rhizobium leguminosarum).